We begin with the raw amino-acid sequence, 124 residues long: U12-barytoxin-Tl1a (124 aa).

An N-terminal signal peptide occupies residues 1-20 (MKTMIAWLVLLTFAAALCFA). Residues 21-78 (DEGLKQEHMNERKKSRFREDIPDEISEDLLLQEMEAMEAELLEKEMRMEENRNSREKR) constitute a propeptide that is removed on maturation. Disulfide bonds link Cys-79-Cys-99, Cys-86-Cys-104, and Cys-98-Cys-118.

This sequence belongs to the neurotoxin 14 (magi-1) family. 04 (ICK-6) subfamily. In terms of tissue distribution, expressed by the venom gland.

The protein resides in the secreted. Functionally, ion channel inhibitor. This chain is U12-barytoxin-Tl1a, found in Trittame loki (Brush-footed trapdoor spider).